The chain runs to 473 residues: Hyaluronidase-2 (473 aa).

An N-terminal signal peptide occupies residues 1–20 (MWTGLGPAVTLALVLVVAWA). 2 disulfide bridges follow: Cys47–Cys343 and Cys214–Cys230. Asn77 and Asn106 each carry an N-linked (GlcNAc...) asparagine glycan. Catalysis depends on Glu138, which acts as the Proton donor. Residues Asn340 and Asn360 are each glycosylated (N-linked (GlcNAc...) asparagine). In terms of domain architecture, EGF-like spans 364–442 (AAQYCSWAQC…YLGWGGEQCQ (79 aa)). Disulfide bonds link Cys368–Cys379, Cys373–Cys430, and Cys432–Cys441. Gly451 is lipidated: GPI-anchor amidated glycine. The propeptide at 452–473 (ASGAWAGSHLTGLLAVAVLAFT) is removed in mature form.

It belongs to the glycosyl hydrolase 56 family. In terms of assembly, interacts with MST1R.

The protein localises to the cell membrane. It carries out the reaction Random hydrolysis of (1-&gt;4)-linkages between N-acetyl-beta-D-glucosamine and D-glucuronate residues in hyaluronate.. Its function is as follows. Catalyzes hyaluronan degradation into small fragments that are endocytosed and degraded in lysosomes by HYAL1 and exoglycosidases. Essential for the breakdown of extracellular matrix hyaluronan. This chain is Hyaluronidase-2 (HYAL2), found in Bos taurus (Bovine).